The chain runs to 232 residues: MANYYEVLGVQASASPEDIKKAYRKLALRWHPDKNPDNKEEAEKKFKLVSEAYEVLSDSKKRSLYDRAGCDSWRAGGGASTPYHSPFDTGYTFRNPEDIFREFFGGLDPFSFEFWDSPFNSDRGGRGHGLRGAFSAGFGEFPAFMEAFSSFNMLGCSGGSHTTFSSTSFGGSSSGSSGFKSVMSSTEMINGHKVTTKRIVENGQERVEVEEDGQLKSVTVNGKEQLKWMDSK.

Positions 3-69 (NYYEVLGVQA…KKRSLYDRAG (67 aa)) constitute a J domain.

In terms of assembly, interacts with histone deacetylases HDAC4, HDAC6, and SIRT2, HDAC activity is required for antiaggregation.

Efficient suppressor of aggregation and toxicity of disease-associated polyglutamine proteins. In Homo sapiens (Human), this protein is DnaJ homolog subfamily B member 8 (DNAJB8).